The following is a 123-amino-acid chain: Protein Wnt-7 (123 aa).

Ser1 carries the O-palmitoleoyl serine; by PORCN lipid modification. 2 N-linked (GlcNAc...) asparagine glycosylation sites follow: Asn79 and Asn90. Cys89 and Cys104 are disulfide-bonded.

This sequence belongs to the Wnt family. In terms of processing, palmitoleoylation is required for efficient binding to frizzled receptors. Depalmitoleoylation leads to Wnt signaling pathway inhibition.

It localises to the secreted. Its subcellular location is the extracellular space. The protein resides in the extracellular matrix. Ligand for members of the frizzled family of seven transmembrane receptors. Probable developmental protein. May be a signaling molecule which affects the development of discrete regions of tissues. Is likely to signal over only few cell diameters. The sequence is that of Protein Wnt-7 (WNT-7) from Strongylocentrotus purpuratus (Purple sea urchin).